The sequence spans 284 residues: 4-diphosphocytidyl-2-C-methyl-D-erythritol kinase (284 aa).

Residue lysine 14 is part of the active site. 98–108 is an ATP binding site; it reads PMGGGLGGGSS. Aspartate 140 is an active-site residue.

It belongs to the GHMP kinase family. IspE subfamily.

It carries out the reaction 4-CDP-2-C-methyl-D-erythritol + ATP = 4-CDP-2-C-methyl-D-erythritol 2-phosphate + ADP + H(+). Its pathway is isoprenoid biosynthesis; isopentenyl diphosphate biosynthesis via DXP pathway; isopentenyl diphosphate from 1-deoxy-D-xylulose 5-phosphate: step 3/6. Functionally, catalyzes the phosphorylation of the position 2 hydroxy group of 4-diphosphocytidyl-2C-methyl-D-erythritol. The chain is 4-diphosphocytidyl-2-C-methyl-D-erythritol kinase from Shewanella sp. (strain MR-4).